We begin with the raw amino-acid sequence, 183 residues long: Peptide deformylase (183 aa).

Positions 110 and 153 each coordinate Fe cation. Residue Glu-154 is part of the active site. Position 157 (His-157) interacts with Fe cation.

It belongs to the polypeptide deformylase family. Requires Fe(2+) as cofactor.

It carries out the reaction N-terminal N-formyl-L-methionyl-[peptide] + H2O = N-terminal L-methionyl-[peptide] + formate. Removes the formyl group from the N-terminal Met of newly synthesized proteins. Requires at least a dipeptide for an efficient rate of reaction. N-terminal L-methionine is a prerequisite for activity but the enzyme has broad specificity at other positions. This chain is Peptide deformylase, found in Listeria monocytogenes serotype 4b (strain CLIP80459).